The following is a 226-amino-acid chain: CD9 antigen (226 aa).

The Cytoplasmic portion of the chain corresponds to 1 to 12 (MPVKGGTKCIKY). A lipid anchor (S-palmitoyl cysteine) is attached at Cys-9. The chain crosses the membrane as a helical span at residues 13–33 (LLFGFNFIFWLAGIAVLAVGL). Residues 34–53 (WLRFDSQTKSIFEQDSQPSS) lie on the Extracellular side of the membrane. A helical membrane pass occupies residues 54–74 (FYTGVYILIGAGALMMLVGFL). The Cytoplasmic portion of the chain corresponds to 75–85 (GCCGAVQESQC). Residues Cys-76, Cys-77, and Cys-85 are each lipidated (S-palmitoyl cysteine). The chain crosses the membrane as a helical span at residues 86–109 (MLGLFFGFLLVIFAIEIAAAIWGY). The Extracellular portion of the chain corresponds to 110–193 (SHKDEVIQEV…KEVFHNKFHI (84 aa)). 2 disulfide bridges follow: Cys-150/Cys-179 and Cys-151/Cys-165. The helical transmembrane segment at 194-219 (IGAVGIGIAVVMIFGMIFSMILCCAI) threads the bilayer. S-palmitoyl cysteine attachment occurs at residues Cys-216 and Cys-217. Residues 220-226 (RRSREMV) lie on the Cytoplasmic side of the membrane.

It belongs to the tetraspanin (TM4SF) family. As to quaternary structure, forms both disulfide-linked homodimers and higher homooligomers as well as heterooligomers with other members of the tetraspanin family. Interacts (via the second extracellular domain) with integrin ITGAV:ITGB3. Interacts with integrin ITGA6:ITGB1; interaction takes place in oocytes and is involved in sperm-egg fusion. Part of integrin-tetraspanin complexes composed of CD81, beta-1 and beta-2 integrins in the membrane of monocyte/macrophages. Interacts with CD63; identified in a complex with CD63 and ITGB3. Associates with CR2/CD21 and with PTGFRN/CD9P1. Part of a complex composed of CD9, CD81, PTGFRN and IGSF8. Interacts directly with IGSF8. Interacts with PDPN; this interaction is homophilic and attenuates platelet aggregation and pulmonary metastasis induced by PDPN. Interacts (on T cell side) with CD81 at immunological synapses between antigen-presenting cells and T cells. In terms of processing, palmitoylated at a low, basal level in unstimulated platelets. The level of palmitoylation increases when platelets are activated by thrombin (in vitro). The protein exists in three forms with molecular masses between 22 and 27 kDa, and is known to carry covalently linked fatty acids. Palmitoylation by ZDHHC2 regulates CD9 expression, association with other tetraspanin family proteins and function in cell adhesion.

It is found in the cell membrane. Its subcellular location is the membrane. The protein localises to the secreted. The protein resides in the extracellular exosome. In terms of biological role, integral membrane protein associated with integrins, which regulates different processes, such as sperm-egg fusion, platelet activation and aggregation, and cell adhesion. Present at the cell surface of oocytes and plays a key role in sperm-egg fusion, possibly by organizing multiprotein complexes and the morphology of the membrane required for the fusion. In myoblasts, associates with CD81 and PTGFRN and inhibits myotube fusion during muscle regeneration. In macrophages, associates with CD81 and beta-1 and beta-2 integrins, and prevents macrophage fusion into multinucleated giant cells specialized in ingesting complement-opsonized large particles. Also prevents the fusion between mononuclear cell progenitors into osteoclasts in charge of bone resorption. Acts as a receptor for PSG17. Involved in platelet activation and aggregation. Regulates paranodal junction formation. Involved in cell adhesion, cell motility and tumor metastasis. The polypeptide is CD9 antigen (Felis catus (Cat)).